We begin with the raw amino-acid sequence, 174 residues long: MTTIVSVRRNGHVVIGGDGQVTLGNTVMKGNAKKVRRLYNNKVIAGFAGGTADAFTLFELFERKLEMHQGHLTKAAVELAKDWRTDRMLRKLEALLAVADETASLIITGNGDVVQPEDDLIAIGSGGPYAQSAARALLENTELGARDIVEKSLSIAGDICIYTNRFQTIEELTY.

The active site involves threonine 2. Glycine 157, cysteine 160, and threonine 163 together coordinate Na(+).

It belongs to the peptidase T1B family. HslV subfamily. As to quaternary structure, a double ring-shaped homohexamer of HslV is capped on each side by a ring-shaped HslU homohexamer. The assembly of the HslU/HslV complex is dependent on binding of ATP.

It localises to the cytoplasm. The enzyme catalyses ATP-dependent cleavage of peptide bonds with broad specificity.. With respect to regulation, allosterically activated by HslU binding. Protease subunit of a proteasome-like degradation complex believed to be a general protein degrading machinery. This Yersinia enterocolitica serotype O:8 / biotype 1B (strain NCTC 13174 / 8081) protein is ATP-dependent protease subunit HslV.